An 896-amino-acid chain; its full sequence is Alanine--tRNA ligase (896 aa).

The Zn(2+) site is built by histidine 574, histidine 578, cysteine 677, and histidine 681.

The protein belongs to the class-II aminoacyl-tRNA synthetase family. Zn(2+) is required as a cofactor.

Its subcellular location is the cytoplasm. The enzyme catalyses tRNA(Ala) + L-alanine + ATP = L-alanyl-tRNA(Ala) + AMP + diphosphate. Functionally, catalyzes the attachment of alanine to tRNA(Ala) in a two-step reaction: alanine is first activated by ATP to form Ala-AMP and then transferred to the acceptor end of tRNA(Ala). Also edits incorrectly charged Ser-tRNA(Ala) and Gly-tRNA(Ala) via its editing domain. This Mycoplasma capricolum subsp. capricolum (strain California kid / ATCC 27343 / NCTC 10154) protein is Alanine--tRNA ligase.